Here is a 305-residue protein sequence, read N- to C-terminus: J domain-containing protein 1 (305 aa).

The J domain maps to 91–163; the sequence is TPYEVLGLVK…SRRRMYDMYA (73 aa). The helical transmembrane segment at 212 to 232 threads the bilayer; that stretch reads WGMVVWALCMLAGFQVMAFLI.

The protein belongs to the DnaJ family.

The protein localises to the mitochondrion membrane. Its function is as follows. Probable chaperone. This Eremothecium gossypii (strain ATCC 10895 / CBS 109.51 / FGSC 9923 / NRRL Y-1056) (Yeast) protein is J domain-containing protein 1 (JID1).